We begin with the raw amino-acid sequence, 662 residues long: MYVVVSVEPLLAWCVVADARDDAVIKHAIRGWICATVDLQPVTLGAVFFTRIPSVGSRLVENSDFHWIVKLPIDGAQQIDTVDRWIALAGCTGGGEANVPSLLENMLFLGFEPEKTATWSAIYTMESAIYNHLLRKGVDIAFHHIIFRRFCDQLDHLGPVPIDVFEKWIPDALLNLEREYGLSIYNLDDKRNFTKFSRPRLGKVLLKRWLADNMIKTNEVSDAELLAICDPDVTPAEPATGAMDLSSLEELIMTLNSRVNIPKAGSFHRVTLRRVTFHQLIKYCLNDDPDDLSVVSLPPRNALPHVPILLMDDSMSHEGVFQYVITDYKSMETVPPGAYSEVFLEGQIVTVLNFDIDRKFSGLLDPMGAIDNICEIFVAFLHRAVEKFFNFNRVDKNRIGEVAVFVRRAALPGKFSARFTWFPAYELCFQNIREAADFTGVFQELLMEEDSFFVYTVTNDGVSTRVCAIDAQPFCRNKSCRLPNSTKMEAGEFRGAFEYIKSYNALVKSNRGYSKMNIGISRSPVAFDRPSLGPQYIFGALARFASAEVTYNSSHASENITVEKDHIDNAYKLLSTIWGDLKISPTTSGSVRLTPWMTRDRFCLVHNRIHHKAGVSVIVTNRRIYPKCFHPDPPAHVIPEGGFLDVVEVAGKPRARVGFCGQ.

This is an uncharacterized protein from Ictalurid herpesvirus 1 (strain Auburn) (IcHV-1).